Consider the following 297-residue polypeptide: 2-dehydropantoate 2-reductase (297 aa).

Residues 11–16, N107, and A133 contribute to the NADP(+) site; that span reads GAGAMG. Residue N107 participates in substrate binding. The active-site Proton donor is K187. Substrate-binding residues include N191, N195, N205, and S251. Residue E263 participates in NADP(+) binding.

It belongs to the ketopantoate reductase family.

The protein resides in the cytoplasm. The enzyme catalyses (R)-pantoate + NADP(+) = 2-dehydropantoate + NADPH + H(+). It participates in cofactor biosynthesis; (R)-pantothenate biosynthesis; (R)-pantoate from 3-methyl-2-oxobutanoate: step 2/2. Functionally, catalyzes the NADPH-dependent reduction of ketopantoate into pantoic acid. The protein is 2-dehydropantoate 2-reductase of Listeria monocytogenes serovar 1/2a (strain ATCC BAA-679 / EGD-e).